Reading from the N-terminus, the 234-residue chain is Small ribosomal subunit protein eS4 (234 aa).

The region spanning 37-99 (VPLLIVLRDV…REEYYRVFPG (63 aa)) is the S4 RNA-binding domain.

This sequence belongs to the eukaryotic ribosomal protein eS4 family.

The chain is Small ribosomal subunit protein eS4 (rps4e) from Haloarcula marismortui (strain ATCC 43049 / DSM 3752 / JCM 8966 / VKM B-1809) (Halobacterium marismortui).